A 480-amino-acid chain; its full sequence is GTPase Obg (480 aa).

An Obg domain is found at 2–159 (TRFIDRVVIH…RDLTLELKTV (158 aa)). One can recognise an OBG-type G domain in the interval 160–341 (ADVGLVGFPS…LTFALWDMVA (182 aa)). Residues 166 to 173 (GFPSAGKS), 191 to 195 (FTTLA), 212 to 215 (DVPG), 292 to 295 (NKID), and 322 to 324 (STV) each bind GTP. Residues Ser173 and Thr193 each contribute to the Mg(2+) site. An OCT domain is found at 359-437 (PIPVDETAFS…IGDMTFDWEP (79 aa)). Positions 441-480 (AGVDVPLTGRGTDVRLEQTDRVGADERKAARKARRQSGDE) are disordered. A compositionally biased stretch (basic and acidic residues) spans 452–468 (TDVRLEQTDRVGADERK). The segment covering 469–480 (AARKARRQSGDE) has biased composition (basic residues).

This sequence belongs to the TRAFAC class OBG-HflX-like GTPase superfamily. OBG GTPase family. In terms of assembly, monomer. The cofactor is Mg(2+).

The protein localises to the cytoplasm. Its function is as follows. An essential GTPase which binds GTP, GDP and possibly (p)ppGpp with moderate affinity, with high nucleotide exchange rates and a fairly low GTP hydrolysis rate. Plays a role in control of the cell cycle, stress response, ribosome biogenesis and in those bacteria that undergo differentiation, in morphogenesis control. In Mycolicibacterium vanbaalenii (strain DSM 7251 / JCM 13017 / BCRC 16820 / KCTC 9966 / NRRL B-24157 / PYR-1) (Mycobacterium vanbaalenii), this protein is GTPase Obg.